The following is a 300-amino-acid chain: UDP-N-acetylenolpyruvoylglucosamine reductase (300 aa).

In terms of domain architecture, FAD-binding PCMH-type spans 27-192 (KVGGPADYLA…ISAKFALKPG (166 aa)). Arg171 is an active-site residue. Ser221 functions as the Proton donor in the catalytic mechanism. Glu291 is an active-site residue.

It belongs to the MurB family. The cofactor is FAD.

It localises to the cytoplasm. The catalysed reaction is UDP-N-acetyl-alpha-D-muramate + NADP(+) = UDP-N-acetyl-3-O-(1-carboxyvinyl)-alpha-D-glucosamine + NADPH + H(+). It functions in the pathway cell wall biogenesis; peptidoglycan biosynthesis. Its function is as follows. Cell wall formation. This is UDP-N-acetylenolpyruvoylglucosamine reductase from Streptococcus agalactiae serotype Ia (strain ATCC 27591 / A909 / CDC SS700).